The following is a 494-amino-acid chain: Alpha-amylase-related protein (494 aa).

The first 20 residues, 1–20, serve as a signal peptide directing secretion; it reads MIKFALALTLCLAGASLSLA. Glutamine 21 bears the Pyrrolidone carboxylic acid mark. A disulfide bridge links cysteine 48 with cysteine 104. Positions 118, 169, and 178 each coordinate Ca(2+). An intrachain disulfide couples cysteine 157 to cysteine 171. Arginine 206 is a chloride binding site. Residue aspartate 208 is the Nucleophile of the active site. Histidine 212 serves as a coordination point for Ca(2+). Residue glutamate 245 is the Proton donor of the active site. Chloride contacts are provided by asparagine 308 and arginine 343. Cystine bridges form between cysteine 376-cysteine 382, cysteine 418-cysteine 441, and cysteine 448-cysteine 460.

This sequence belongs to the glycosyl hydrolase 13 family. As to quaternary structure, monomer. It depends on Ca(2+) as a cofactor. The cofactor is chloride.

It localises to the secreted. The enzyme catalyses Endohydrolysis of (1-&gt;4)-alpha-D-glucosidic linkages in polysaccharides containing three or more (1-&gt;4)-alpha-linked D-glucose units.. The protein is Alpha-amylase-related protein (Amyrel) of Drosophila bocqueti (Fruit fly).